A 163-amino-acid polypeptide reads, in one-letter code: Cytochrome c-type biogenesis protein CcmE (163 aa).

At 1–7 the chain is on the cytoplasmic side; it reads MTRKQRR. The helical; Signal-anchor for type II membrane protein transmembrane segment at 8 to 28 threads the bilayer; it reads LVFIGTCGAVLAVALGLVLWA. The Periplasmic segment spans residues 29 to 163; the sequence is MSGTIVFFRS…RTASGEARAP (135 aa). Heme-binding residues include H122 and Y126. The segment at 134-163 is disordered; sequence ALKKSGRWQEGAGHPAPAPPRTASGEARAP.

It belongs to the CcmE/CycJ family.

The protein resides in the cell inner membrane. Functionally, heme chaperone required for the biogenesis of c-type cytochromes. Transiently binds heme delivered by CcmC and transfers the heme to apo-cytochromes in a process facilitated by CcmF and CcmH. This chain is Cytochrome c-type biogenesis protein CcmE, found in Methylobacterium sp. (strain 4-46).